A 257-amino-acid polypeptide reads, in one-letter code: tRNA pseudouridine synthase A (257 aa).

The Nucleophile role is filled by Asp53. Substrate is bound at residue Tyr111.

This sequence belongs to the tRNA pseudouridine synthase TruA family. As to quaternary structure, homodimer.

It catalyses the reaction uridine(38/39/40) in tRNA = pseudouridine(38/39/40) in tRNA. Formation of pseudouridine at positions 38, 39 and 40 in the anticodon stem and loop of transfer RNAs. In Xylella fastidiosa (strain M12), this protein is tRNA pseudouridine synthase A.